An 86-amino-acid chain; its full sequence is Apolipoprotein C-I (86 aa).

Residues 1 to 26 (MRLFLSLPVLVVVLLMILEGPGPAQG) form the signal peptide.

This sequence belongs to the apolipoprotein C1 family.

It is found in the secreted. Inhibitor of lipoprotein binding to the low density lipoprotein (LDL) receptor, LDL receptor-related protein, and very low density lipoprotein (VLDL) receptor. Associates with high density lipoproteins (HDL) and the triacylglycerol-rich lipoproteins in the plasma and makes up about 10% of the protein of the VLDL and 2% of that of HDL. Appears to interfere directly with fatty acid uptake and is also the major plasma inhibitor of cholesteryl ester transfer protein (CETP). Binds free fatty acids and reduces their intracellular esterification. Modulates the interaction of APOE with beta-migrating VLDL and inhibits binding of beta-VLDL to the LDL receptor-related protein. The sequence is that of Apolipoprotein C-I (APOC1) from Saimiri boliviensis boliviensis (Bolivian squirrel monkey).